A 471-amino-acid chain; its full sequence is GPI mannosyltransferase 2 (471 aa).

Transmembrane regions (helical) follow at residues Leu23–Val43, Val135–Val155, Leu169–Pro189, Tyr190–Cys210, Leu227–Leu247, Leu277–Ala297, Tyr348–Val368, and Ile449–Pro469.

Belongs to the PIGV family.

The protein resides in the endoplasmic reticulum membrane. It participates in glycolipid biosynthesis; glycosylphosphatidylinositol-anchor biosynthesis. Its function is as follows. Mannosyltransferase involved in glycosylphosphatidylinositol-anchor biosynthesis. Transfers the second mannose to the glycosylphosphatidylinositol during GPI precursor assembly. The polypeptide is GPI mannosyltransferase 2 (GPI18) (Chaetomium globosum (strain ATCC 6205 / CBS 148.51 / DSM 1962 / NBRC 6347 / NRRL 1970) (Soil fungus)).